The chain runs to 489 residues: MPIVNVKWQKEKYVVEVDTSAPPMVFKAQLFALTQVVPERQKVVIMGRTLGDDDWEGITIKENMTIMMMGSVGEIPKPPTVLEKKQANRDKQAEEISALYPCGLANLGNTCYFNSCVQMLKEVNELVLKPAEEMRIREHNDRLCHNLATLFNSLRDKDRALRSKGEPIKPFAAILTLSDSFPQFEKFKQQDANECLVSIMSNVTRIYGLSGWNIESLFRIQTETTMKCLESDEVSEKKVERNNQLTCYVNQDVRFLQTGIKAGFEEEMTRNSEELNRDAKWQKNTQISRLPKYLTVNINRFFYKESTKTNAKILKSVQFPMQLDTYDLCSQELKDKLVARRADIKLEEDAKLERELRKKVLDKEQGDKIFDDGVALPTAFEDDAGSNNSGFYDLKGIITHKGRSSQDGHYVAWMRSSEDGKWRLFDDEHVTVVDEEAILKTSGGGDWHSAYVLLYEARVIKQFPELPPAPVPTEVAADTAEPMEVSEKQ.

Positions 102-458 (CGLANLGNTC…SAYVLLYEAR (357 aa)) constitute a USP domain. Residue Cys-111 is the Nucleophile of the active site. The Proton acceptor role is filled by His-409. Residues 467–489 (PPAPVPTEVAADTAEPMEVSEKQ) are disordered.

Belongs to the peptidase C19 family. USP14/UBP6 subfamily.

It catalyses the reaction Thiol-dependent hydrolysis of ester, thioester, amide, peptide and isopeptide bonds formed by the C-terminal Gly of ubiquitin (a 76-residue protein attached to proteins as an intracellular targeting signal).. Proteasome-associated deubiquitinase which releases ubiquitin from the proteasome targeted ubiquitinated proteins. Ensures the regeneration of ubiquitin at the proteasome. The chain is Ubiquitin carboxyl-terminal hydrolase 14 (usp-14) from Caenorhabditis elegans.